The chain runs to 144 residues: Prefoldin subunit alpha (144 aa).

It belongs to the prefoldin alpha subunit family. Heterohexamer of two alpha and four beta subunits.

It localises to the cytoplasm. Functionally, molecular chaperone capable of stabilizing a range of proteins. Seems to fulfill an ATP-independent, HSP70-like function in archaeal de novo protein folding. The chain is Prefoldin subunit alpha from Methanococcus maripaludis (strain C5 / ATCC BAA-1333).